We begin with the raw amino-acid sequence, 217 residues long: Ribonuclease HII (217 aa).

Positions 26–215 (EIVCGVDEAG…VREALDLMAG (190 aa)) constitute an RNase H type-2 domain. Positions 32, 33, and 124 each coordinate a divalent metal cation.

Belongs to the RNase HII family. Mn(2+) serves as cofactor. The cofactor is Mg(2+).

It is found in the cytoplasm. The catalysed reaction is Endonucleolytic cleavage to 5'-phosphomonoester.. In terms of biological role, endonuclease that specifically degrades the RNA of RNA-DNA hybrids. This chain is Ribonuclease HII, found in Burkholderia ambifaria (strain ATCC BAA-244 / DSM 16087 / CCUG 44356 / LMG 19182 / AMMD) (Burkholderia cepacia (strain AMMD)).